The following is an 833-amino-acid chain: Translation initiation factor IF-2 (833 aa).

One can recognise a tr-type G domain in the interval Thr331–Lys501. Residues Gly340 to Thr347 are G1. Gly340–Thr347 is a GTP binding site. The G2 stretch occupies residues Gly365–His369. The interval Asp387–Gly390 is G3. Residues Asp387–His391 and Asn441–Asp444 each bind GTP. A G4 region spans residues Asn441–Asp444. The tract at residues Ser477–Leu479 is G5.

The protein belongs to the TRAFAC class translation factor GTPase superfamily. Classic translation factor GTPase family. IF-2 subfamily.

It is found in the cytoplasm. In terms of biological role, one of the essential components for the initiation of protein synthesis. Protects formylmethionyl-tRNA from spontaneous hydrolysis and promotes its binding to the 30S ribosomal subunits. Also involved in the hydrolysis of GTP during the formation of the 70S ribosomal complex. This is Translation initiation factor IF-2 from Rickettsia canadensis (strain McKiel).